The chain runs to 141 residues: Large ribosomal subunit protein uL11 (141 aa).

The protein belongs to the universal ribosomal protein uL11 family. Part of the ribosomal stalk of the 50S ribosomal subunit. Interacts with L10 and the large rRNA to form the base of the stalk. L10 forms an elongated spine to which L12 dimers bind in a sequential fashion forming a multimeric L10(L12)X complex. Post-translationally, one or more lysine residues are methylated.

Functionally, forms part of the ribosomal stalk which helps the ribosome interact with GTP-bound translation factors. The chain is Large ribosomal subunit protein uL11 from Syntrophus aciditrophicus (strain SB).